The primary structure comprises 217 residues: Small ribosomal subunit protein uS3c (217 aa).

In terms of domain architecture, KH type-2 spans 43–117 (IKNYVQKNRK…KLNIAITRIA (75 aa)).

Belongs to the universal ribosomal protein uS3 family. Part of the 30S ribosomal subunit.

The protein localises to the plastid. Its subcellular location is the chloroplast. The chain is Small ribosomal subunit protein uS3c (rps3) from Ranunculus macranthus (Large buttercup).